A 332-amino-acid chain; its full sequence is L-lactate dehydrogenase A chain (332 aa).

Alanine 2 bears the N-acetylalanine mark. The residue at position 5 (lysine 5) is an N6-acetyllysine; alternate. The residue at position 5 (lysine 5) is an N6-succinyllysine; alternate. The residue at position 14 (lysine 14) is an N6-acetyllysine. 29–57 (GAVGMACAISILMKELADEIALVDVMEDK) lines the NAD(+) pocket. Lysine 57 is modified (N6-acetyllysine; alternate). A Glycyl lysine isopeptide (Lys-Gly) (interchain with G-Cter in SUMO2); alternate cross-link involves residue lysine 57. An N6-acetyllysine modification is found at lysine 81. Arginine 99 is an NAD(+) binding site. Arginine 106 provides a ligand contact to substrate. Lysine 118 carries the post-translational modification N6-acetyllysine; alternate. Lysine 118 carries the N6-succinyllysine; alternate modification. N6-acetyllysine is present on lysine 126. Asparagine 138 contributes to the NAD(+) binding site. Residues asparagine 138 and arginine 169 each contribute to the substrate site. Histidine 193 acts as the Proton acceptor in catalysis. N6-acetyllysine occurs at positions 224 and 232. Tyrosine 239 carries the phosphotyrosine modification. Position 243 is an N6-acetyllysine (lysine 243). Threonine 248 is a substrate binding site. Residue threonine 309 is modified to Phosphothreonine. Lysine 318 carries the N6-acetyllysine; alternate modification. The residue at position 318 (lysine 318) is an N6-succinyllysine; alternate. At threonine 322 the chain carries Phosphothreonine.

The protein belongs to the LDH/MDH superfamily. LDH family. In terms of assembly, homotetramer. Interacts with PTEN upstream reading frame protein MP31. Post-translationally, ISGylated.

Its subcellular location is the cytoplasm. It carries out the reaction (S)-lactate + NAD(+) = pyruvate + NADH + H(+). The protein operates within fermentation; pyruvate fermentation to lactate; (S)-lactate from pyruvate: step 1/1. Functionally, interconverts simultaneously and stereospecifically pyruvate and lactate with concomitant interconversion of NADH and NAD(+). The chain is L-lactate dehydrogenase A chain (LDHA) from Sus scrofa (Pig).